A 476-amino-acid polypeptide reads, in one-letter code: Bifunctional protein HldE (476 aa).

Residues 1–319 (MKVSLPAFEK…EALALHHGES (319 aa)) are ribokinase. Residue 195–198 (NMSE) coordinates ATP. D264 is a catalytic residue. The cytidylyltransferase stretch occupies residues 345–476 (MTNGCFDILH…AIIQNIMANQ (132 aa)).

It in the N-terminal section; belongs to the carbohydrate kinase PfkB family. In the C-terminal section; belongs to the cytidylyltransferase family. In terms of assembly, homodimer.

The catalysed reaction is D-glycero-beta-D-manno-heptose 7-phosphate + ATP = D-glycero-beta-D-manno-heptose 1,7-bisphosphate + ADP + H(+). It carries out the reaction D-glycero-beta-D-manno-heptose 1-phosphate + ATP + H(+) = ADP-D-glycero-beta-D-manno-heptose + diphosphate. Its pathway is nucleotide-sugar biosynthesis; ADP-L-glycero-beta-D-manno-heptose biosynthesis; ADP-L-glycero-beta-D-manno-heptose from D-glycero-beta-D-manno-heptose 7-phosphate: step 1/4. The protein operates within nucleotide-sugar biosynthesis; ADP-L-glycero-beta-D-manno-heptose biosynthesis; ADP-L-glycero-beta-D-manno-heptose from D-glycero-beta-D-manno-heptose 7-phosphate: step 3/4. Functionally, catalyzes the phosphorylation of D-glycero-D-manno-heptose 7-phosphate at the C-1 position to selectively form D-glycero-beta-D-manno-heptose-1,7-bisphosphate. Catalyzes the ADP transfer from ATP to D-glycero-beta-D-manno-heptose 1-phosphate, yielding ADP-D-glycero-beta-D-manno-heptose. In Shewanella sp. (strain W3-18-1), this protein is Bifunctional protein HldE.